The chain runs to 233 residues: Forkhead box protein L3 (233 aa).

The fork-head DNA-binding region spans 32 to 130; that stretch reads RPAYSYIALI…ENGNYRRRRR (99 aa). Positions 125–134 are enriched in basic residues; sequence YRRRRRRRGP. Residues 125–198 are disordered; the sequence is YRRRRRRRGP…PRDLKFSIDY (74 aa). The segment covering 175–184 has biased composition (pro residues); sequence REPPASPAPP. Residues 185–194 are compositionally biased toward basic and acidic residues; that stretch reads GKEHPRDLKF.

The protein localises to the nucleus. Its function is as follows. Probable transcriptional regulator. This Homo sapiens (Human) protein is Forkhead box protein L3.